We begin with the raw amino-acid sequence, 275 residues long: Lectin 8 (275 aa).

The N-terminal stretch at 1–31 is a signal peptide; that stretch reads MANSNPKLLVTQNPFSVFLLTFLLLITNVKS. Asn-55 and Asn-150 each carry an N-linked (GlcNAc...) asparagine glycan.

The protein belongs to the leguminous lectin family.

Its function is as follows. May be involved in arbuscular mycorrhizal (AM) symbiosis with AM fungi. The sequence is that of Lectin 8 from Medicago truncatula (Barrel medic).